A 624-amino-acid polypeptide reads, in one-letter code: Ceramide transfer protein (624 aa).

Residues 1-11 show a composition bias toward polar residues; it reads MSDNQSWNSSG. Residues 1 to 24 form a disordered region; the sequence is MSDNQSWNSSGSEEDPETESGPPV. The region spanning 23-117 is the PH domain; that stretch reads PVERCGVLSK…WIDAIEQHKT (95 aa). S126 carries the post-translational modification Phosphoserine. S132 carries the phosphoserine; by PKD modification. At S135 the chain carries Phosphoserine. Positions 263 to 303 form a coiled coil; sequence IELMVKREDSWQKRLDKETEKKRRTEEAYKNAMTELKKKSH. A Phosphoserine modification is found at S315. Positions 321-327 match the FFAT motif; sequence EFFDAVE. Position 372 is a phosphotyrosine (Y372). Phosphoserine is present on residues S373, S377, and S380. In terms of domain architecture, START spans 389–618; it reads DVHRFSSQVE…FTSYVQEKTA (230 aa). Residues E472, Q493, N530, and Y579 each coordinate an N-acylsphing-4-enine.

As to quaternary structure, interacts with VAPA and VAPB. Interaction with VAPB is less efficient than with VAPA. Interacts (via FFAT motif) with MOSPD2 (via MSP domain). Post-translationally, phosphorylation on Ser-132 decreases the affinity toward phosphatidylinositol 4-phosphate at Golgi membranes and reduces ceramide transfer activity. Inactivated by hyperphosphorylation of serine residues by CSNK1G2/CK1 that triggers dissociation from the Golgi complex, thus down-regulating ER-to-Golgi transport of ceramide and sphingomyelin synthesis. Widely expressed.

It is found in the cytoplasm. Its subcellular location is the golgi apparatus. The protein resides in the endoplasmic reticulum. The enzyme catalyses N-hexadecanoylsphing-4-enine(in) = N-hexadecanoylsphing-4-enine(out). Shelters ceramides and diacylglycerol lipids inside its START domain and mediates the intracellular trafficking of ceramides and diacylglycerol lipids in a non-vesicular manner. This Homo sapiens (Human) protein is Ceramide transfer protein.